A 653-amino-acid polypeptide reads, in one-letter code: Large subunit GTPase 1 homolog (653 aa).

A disordered region spans residues 1 to 47 (MGKKRGTGLGRSLQRQRGSERRGASSWLHASEVVGESGPERRSAVEQ). The CP-type G domain occupies 155-439 (WRQLWRVIER…LCDCPGLVMP (285 aa)). 203-206 (NKAD) provides a ligand contact to GTP. The segment covering 248–275 (ADSVADDLSDSEEESSSQEEDVTAEDSA) has biased composition (acidic residues). A disordered region spans residues 248-323 (ADSVADDLSD…TCSEDEGGDK (76 aa)). Positions 276–291 (ESTSTGSALQTENQCL) are enriched in polar residues. Over residues 293–320 (SDDDSSDEYEDCEDEEEDDWQTCSEDEG) the composition is skewed to acidic residues. Residues 388–395 (GYPNVGKS) and 432–435 (DCPG) contribute to the GTP site. The tract at residues 621 to 653 (APSAGSVVGKPWKKHGNRNKKEKVRRITKHLEN) is disordered. Over residues 631–653 (PWKKHGNRNKKEKVRRITKHLEN) the composition is skewed to basic residues.

Belongs to the TRAFAC class YlqF/YawG GTPase family. LSG1 subfamily.

The protein localises to the cytoplasm. The protein resides in the endoplasmic reticulum. It is found in the nucleus. It localises to the cajal body. The catalysed reaction is GTP + H2O = GDP + phosphate + H(+). In terms of biological role, GTPase required for the XPO1/CRM1-mediated nuclear export of the 60S ribosomal subunit. Probably acts by mediating the release of NMD3 from the 60S ribosomal subunit after export into the cytoplasm. Functionally, functions as a GTPase. May act by mediating the release of NMD3 from the 60S ribosomal subunit after export into the cytoplasm during the 60S ribosomal subunit maturation. The polypeptide is Large subunit GTPase 1 homolog (Gallus gallus (Chicken)).